Consider the following 224-residue polypeptide: MKPQDLKAPFFGEERKTQIKDDVLYIPEHYFKHGQFEMPSWEEFFGNNHPIFCELCSGNGDWVVAQANKNPNMNWIAVEKRFDRVRKIWSKMHNSQVRNLRIVCGEAQTFFRHYIQNEVIQRIVVNFPDPWPKSRHRKHRLFQYEFMNDIVRVLVDSGIIILATDDKNYLLQAIKIMQQRLLPKLEEPYYCKMLENYGDSWFERLWRSKGQEIFYTEFVKKVGI.

Glu-54, Glu-79, Glu-106, and Asp-129 together coordinate S-adenosyl-L-methionine. Asp-129 is a catalytic residue. Positions 133 and 165 each coordinate substrate.

Belongs to the class I-like SAM-binding methyltransferase superfamily. TrmB family.

The enzyme catalyses guanosine(46) in tRNA + S-adenosyl-L-methionine = N(7)-methylguanosine(46) in tRNA + S-adenosyl-L-homocysteine. The protein operates within tRNA modification; N(7)-methylguanine-tRNA biosynthesis. Catalyzes the formation of N(7)-methylguanine at position 46 (m7G46) in tRNA. This chain is tRNA (guanine-N(7)-)-methyltransferase, found in Chlamydia abortus (strain DSM 27085 / S26/3) (Chlamydophila abortus).